Here is a 493-residue protein sequence, read N- to C-terminus: Alpha-amylase-related protein (493 aa).

An N-terminal signal peptide occupies residues 1–19 (MFKFALTLTLCLAGSLSLA). Q20 bears the Pyrrolidone carboxylic acid mark. A disulfide bridge connects residues C47 and C103. Positions 117, 168, and 177 each coordinate Ca(2+). C156 and C170 form a disulfide bridge. R205 serves as a coordination point for chloride. The active-site Nucleophile is D207. H211 lines the Ca(2+) pocket. Catalysis depends on E244, which acts as the Proton donor. Chloride-binding residues include N307 and R342. 3 disulfides stabilise this stretch: C375–C381, C417–C440, and C447–C459.

The protein belongs to the glycosyl hydrolase 13 family. Monomer. Ca(2+) is required as a cofactor. It depends on chloride as a cofactor.

The protein resides in the secreted. It carries out the reaction Endohydrolysis of (1-&gt;4)-alpha-D-glucosidic linkages in polysaccharides containing three or more (1-&gt;4)-alpha-linked D-glucose units.. In Drosophila sechellia (Fruit fly), this protein is Alpha-amylase-related protein (Amyrel).